The primary structure comprises 208 residues: Guanylate kinase (208 aa).

The Guanylate kinase-like domain occupies 4–184; it reads GTLYIVSAPS…ALMDFKAIIR (181 aa). An ATP-binding site is contributed by 11–18; sequence APSGAGKS.

The protein belongs to the guanylate kinase family.

The protein resides in the cytoplasm. The enzyme catalyses GMP + ATP = GDP + ADP. Essential for recycling GMP and indirectly, cGMP. This chain is Guanylate kinase, found in Photobacterium profundum (strain SS9).